The following is a 208-amino-acid chain: Putative 3-methyladenine DNA glycosylase (208 aa).

This sequence belongs to the DNA glycosylase MPG family.

In Prosthecochloris aestuarii (strain DSM 271 / SK 413), this protein is Putative 3-methyladenine DNA glycosylase.